The chain runs to 151 residues: 3-dehydroquinate dehydratase (151 aa).

Tyrosine 24 serves as the catalytic Proton acceptor. The substrate site is built by asparagine 76, histidine 82, and aspartate 89. Histidine 102 acts as the Proton donor in catalysis. Substrate contacts are provided by residues 103–104 (LS) and arginine 113.

The protein belongs to the type-II 3-dehydroquinase family. In terms of assembly, homododecamer.

The enzyme catalyses 3-dehydroquinate = 3-dehydroshikimate + H2O. Its pathway is metabolic intermediate biosynthesis; chorismate biosynthesis; chorismate from D-erythrose 4-phosphate and phosphoenolpyruvate: step 3/7. Its function is as follows. Catalyzes a trans-dehydration via an enolate intermediate. This is 3-dehydroquinate dehydratase from Acinetobacter baumannii (strain AB307-0294).